We begin with the raw amino-acid sequence, 240 residues long: 1-(5-phosphoribosyl)-5-[(5-phosphoribosylamino)methylideneamino] imidazole-4-carboxamide isomerase 1 (240 aa).

The active-site Proton acceptor is the Asp-8. The Proton donor role is filled by Asp-129.

Belongs to the HisA/HisF family.

The protein localises to the cytoplasm. It catalyses the reaction 1-(5-phospho-beta-D-ribosyl)-5-[(5-phospho-beta-D-ribosylamino)methylideneamino]imidazole-4-carboxamide = 5-[(5-phospho-1-deoxy-D-ribulos-1-ylimino)methylamino]-1-(5-phospho-beta-D-ribosyl)imidazole-4-carboxamide. It participates in amino-acid biosynthesis; L-histidine biosynthesis; L-histidine from 5-phospho-alpha-D-ribose 1-diphosphate: step 4/9. The protein is 1-(5-phosphoribosyl)-5-[(5-phosphoribosylamino)methylideneamino] imidazole-4-carboxamide isomerase 1 of Ruegeria pomeroyi (strain ATCC 700808 / DSM 15171 / DSS-3) (Silicibacter pomeroyi).